Here is a 580-residue protein sequence, read N- to C-terminus: Negative elongation factor B (580 aa).

Lysine 519 bears the N6-acetyllysine mark. The disordered stretch occupies residues aspartate 552–leucine 580. The residue at position 557 (serine 557) is a Phosphoserine.

This sequence belongs to the NELF-B family. As to quaternary structure, the NELF complex is composed of NELFA, NELFB, NELFCD and NELFE; the N-terminus of NELFB binds to the NELFA:NELFCD subcomplex. Binds RNA which may help to stabilize the NELF complex on nucleic acid Interacts with the first BRCT repeat of BRCA1. Interacts with KIAA1191. Isoform 1 and isoform 2 interact with NELFA, NELFCD and NELFE. As to expression, isoform 1 is expressed in the kidney, liver, adipose and lung. Isoform 2 is widely expressed.

It is found in the nucleus. Functionally, essential component of the NELF complex, a complex that negatively regulates the elongation of transcription by RNA polymerase II (Pol II). The NELF complex, which acts via an association with the DSIF complex and causes transcriptional pausing, is counteracted by the P-TEFb kinase complex. May be able to induce chromatin unfolding. Essential for early embryogenesis; plays an important role in maintaining the undifferentiated state of embryonic stem cells (ESCs) by preventing unscheduled expression of developmental genes. Plays a key role in establishing the responsiveness of stem cells to developmental cues; facilitates plasticity and cell fate commitment in ESCs by establishing the appropriate expression level of signaling molecules. Supports the transcription of genes involved in energy metabolism in cardiomyocytes; facilitates the association of transcription initiation factors with the promoters of the metabolism-related genes. The protein is Negative elongation factor B (Nelfb) of Mus musculus (Mouse).